A 90-amino-acid chain; its full sequence is Small ribosomal subunit protein uS17 (90 aa).

The protein belongs to the universal ribosomal protein uS17 family. Part of the 30S ribosomal subunit.

Functionally, one of the primary rRNA binding proteins, it binds specifically to the 5'-end of 16S ribosomal RNA. This chain is Small ribosomal subunit protein uS17, found in Acidiphilium cryptum (strain JF-5).